Consider the following 179-residue polypeptide: Large ribosomal subunit protein uL5 (179 aa).

This sequence belongs to the universal ribosomal protein uL5 family. Part of the 50S ribosomal subunit; part of the 5S rRNA/L5/L18/L25 subcomplex. Contacts the 5S rRNA and the P site tRNA. Forms a bridge to the 30S subunit in the 70S ribosome.

Its function is as follows. This is one of the proteins that bind and probably mediate the attachment of the 5S RNA into the large ribosomal subunit, where it forms part of the central protuberance. In the 70S ribosome it contacts protein S13 of the 30S subunit (bridge B1b), connecting the 2 subunits; this bridge is implicated in subunit movement. Contacts the P site tRNA; the 5S rRNA and some of its associated proteins might help stabilize positioning of ribosome-bound tRNAs. The protein is Large ribosomal subunit protein uL5 of Bacillus mycoides (strain KBAB4) (Bacillus weihenstephanensis).